We begin with the raw amino-acid sequence, 66 residues long: Large ribosomal subunit protein uL29 (66 aa).

This sequence belongs to the universal ribosomal protein uL29 family.

The protein is Large ribosomal subunit protein uL29 of Pseudothermotoga lettingae (strain ATCC BAA-301 / DSM 14385 / NBRC 107922 / TMO) (Thermotoga lettingae).